The following is a 347-amino-acid chain: Protein N-terminal asparagine amidohydrolase (347 aa).

It catalyses the reaction N-terminal L-asparaginyl-[protein] + H2O + H(+) = N-terminal L-aspartyl-[protein] + NH4(+). Its function is as follows. N-terminal asparagine deamidase that mediates deamidation of N-terminal asparagine residues to aspartate. Required for the ubiquitin-dependent turnover of intracellular proteins that initiate with Met-Asn. These proteins are acetylated on the retained initiator methionine and can subsequently be modified by the removal of N-acetyl methionine by acylaminoacid hydrolase (AAH). Conversion of the resulting N-terminal asparagine to aspartate by NTAN1 renders the protein susceptible to arginylation, polyubiquitination and degradation as specified by the N-end rule. This enzyme does not act on substrates with internal or C-terminal asparagines and does not act on glutamine residues in any position. Does not seem to be involved in immune response, unlike the N-terminal glutamine amidohydrolase NTAQ1. The polypeptide is Protein N-terminal asparagine amidohydrolase (Arabidopsis thaliana (Mouse-ear cress)).